A 338-amino-acid chain; its full sequence is Ketol-acid reductoisomerase (NADP(+)) (338 aa).

The KARI N-terminal Rossmann domain maps to 1-181 (MKVFYDKDCD…GGGRAGIIET (181 aa)). NADP(+) contacts are provided by residues 24–27 (YGSQ), arginine 47, and serine 52. Histidine 107 is an active-site residue. Glycine 133 contributes to the NADP(+) binding site. A KARI C-terminal knotted domain is found at 182-327 (DFREETETDL…GKLRAMMPWI (146 aa)). Positions 190, 194, 226, and 230 each coordinate Mg(2+). Substrate is bound at residue serine 251.

Belongs to the ketol-acid reductoisomerase family. Mg(2+) is required as a cofactor.

The enzyme catalyses (2R)-2,3-dihydroxy-3-methylbutanoate + NADP(+) = (2S)-2-acetolactate + NADPH + H(+). It catalyses the reaction (2R,3R)-2,3-dihydroxy-3-methylpentanoate + NADP(+) = (S)-2-ethyl-2-hydroxy-3-oxobutanoate + NADPH + H(+). The protein operates within amino-acid biosynthesis; L-isoleucine biosynthesis; L-isoleucine from 2-oxobutanoate: step 2/4. Its pathway is amino-acid biosynthesis; L-valine biosynthesis; L-valine from pyruvate: step 2/4. Involved in the biosynthesis of branched-chain amino acids (BCAA). Catalyzes an alkyl-migration followed by a ketol-acid reduction of (S)-2-acetolactate (S2AL) to yield (R)-2,3-dihydroxy-isovalerate. In the isomerase reaction, S2AL is rearranged via a Mg-dependent methyl migration to produce 3-hydroxy-3-methyl-2-ketobutyrate (HMKB). In the reductase reaction, this 2-ketoacid undergoes a metal-dependent reduction by NADPH to yield (R)-2,3-dihydroxy-isovalerate. The protein is Ketol-acid reductoisomerase (NADP(+)) of Bordetella petrii (strain ATCC BAA-461 / DSM 12804 / CCUG 43448).